A 123-amino-acid chain; its full sequence is Small ribosomal subunit protein uS12 (123 aa).

Asp89 carries the post-translational modification 3-methylthioaspartic acid. The interval Gly100 to Lys123 is disordered. Residues Asn111 to Lys123 are compositionally biased toward basic residues.

The protein belongs to the universal ribosomal protein uS12 family. As to quaternary structure, part of the 30S ribosomal subunit. Contacts proteins S8 and S17. May interact with IF1 in the 30S initiation complex.

In terms of biological role, with S4 and S5 plays an important role in translational accuracy. Interacts with and stabilizes bases of the 16S rRNA that are involved in tRNA selection in the A site and with the mRNA backbone. Located at the interface of the 30S and 50S subunits, it traverses the body of the 30S subunit contacting proteins on the other side and probably holding the rRNA structure together. The combined cluster of proteins S8, S12 and S17 appears to hold together the shoulder and platform of the 30S subunit. The polypeptide is Small ribosomal subunit protein uS12 (Pseudomonas syringae pv. syringae (strain B728a)).